Here is a 100-residue protein sequence, read N- to C-terminus: Integration host factor subunit alpha (100 aa).

Residues 53–72 form a disordered region; that stretch reads FDLRDKKQRPGRNPKTGEEI.

The protein belongs to the bacterial histone-like protein family. Heterodimer of an alpha and a beta chain.

Its function is as follows. This protein is one of the two subunits of integration host factor, a specific DNA-binding protein that functions in genetic recombination as well as in transcriptional and translational control. This Marinobacter nauticus (strain ATCC 700491 / DSM 11845 / VT8) (Marinobacter aquaeolei) protein is Integration host factor subunit alpha.